Reading from the N-terminus, the 845-residue chain is Envelope glycoprotein B (845 aa).

The first 26 residues, 1 to 26 (MTPRSRLATLGTVILLVCFCAGAAHS), serve as a signal peptide directing secretion. Over 27-732 (RGDTFQTSSS…TGFINFIKHP (706 aa)) the chain is Virion surface. The tract at residues 29-57 (DTFQTSSSPTPPGSSSKAPTKPGEEASGP) is disordered. The segment covering 33 to 49 (TSSSPTPPGSSSKAPTK) has biased composition (low complexity). Cystine bridges form between Cys68-Cys528, Cys85-Cys484, Cys157-Cys222, Cys315-Cys362, and Cys550-Cys587. The tract at residues 124-130 (VYRGLTE) is involved in fusion and/or binding to host membrane. A glycan (N-linked (GlcNAc...) asparagine; by host) is linked at Asn179. The interval 208–216 (GWFPGIYRV) is involved in fusion and/or binding to host membrane. N-linked (GlcNAc...) asparagine; by host glycosylation is found at Asn254, Asn275, Asn355, Asn368, Asn372, Asn385, and Asn408. The interval 411–451 (HAQGDSGNPTSSPPPSASPMTTSASRRKRRSASTAAAGGGG) is disordered. N-linked (GlcNAc...) asparagine; by host glycosylation is found at Asn455, Asn562, Asn599, Asn614, and Asn628. Residues 678–730 (LDNTIDMNKERFVRDLSEIVADLGGIGKTVVNVASSVVTLCGSLVTGFINFIK) form a hydrophobic membrane proximal region region. Residues 733 to 753 (LGGMLMIIIVIAIILIIFMLS) form a helical membrane-spanning segment. Topologically, residues 754–845 (RRTNTIAQAP…SLDISPETGE (92 aa)) are intravirion. The disordered stretch occupies residues 802 to 845 (RQKADDLKKSTPSVFQRTANGLRQRLRGYKPLTQSLDISPETGE). Positions 811-822 (STPSVFQRTANG) are enriched in polar residues. Positions 830–833 (YKPL) match the Internalization motif motif.

The protein belongs to the herpesviridae glycoprotein B family. As to quaternary structure, homotrimer; disulfide-linked. Binds to heparan sulfate proteoglycans. Interacts with gH/gL heterodimer. Interacts with host ITGAV-ITGB3; this interaction mediates viral entry. In terms of processing, a proteolytic cleavage by host furin generates two subunits that remain linked by disulfide bonds.

It is found in the virion membrane. It localises to the host cell membrane. The protein localises to the host endosome membrane. Its subcellular location is the host Golgi apparatus membrane. Functionally, envelope glycoprotein that forms spikes at the surface of the virion envelope. Participates in viral entry through an RGD motif that binds ITGAV-ITGB3. Membrane fusion is mediated by the fusion machinery composed at least of gB and the heterodimer gH/gL. May be involved in the fusion between the virion envelope and the outer nuclear membrane during virion egress. The polypeptide is Envelope glycoprotein B (Homo sapiens (Human)).